The following is a 68-amino-acid chain: MAKASELKELSLADLQKREAEFKEELFNLRFQLATGQLENTARIAQVRKDIARVKTVIRAQELANANK.

Belongs to the universal ribosomal protein uL29 family.

The polypeptide is Large ribosomal subunit protein uL29 (Leuconostoc citreum (strain KM20)).